A 422-amino-acid chain; its full sequence is Protein FAM53B (422 aa).

Residues Ser-119, Ser-168, Ser-170, Ser-180, Ser-213, and Ser-269 each carry the phosphoserine modification. Disordered stretches follow at residues 193–225 and 243–269; these read GQPCQGAPGSAPCGQAGDSWSPDPHPVGGGRLD and CPPSANSTPASTPELARRSSGLARSRS. The span at 244 to 269 shows a compositional bias: low complexity; sequence PPSANSTPASTPELARRSSGLARSRS. The short motif at 282-285 is the Nuclear localization signal element; that stretch reads KRRR. Residues Ser-335 and Ser-344 each carry the phosphoserine modification.

The protein belongs to the FAM53 family. In terms of assembly, interacts with CTNNB1.

Its subcellular location is the nucleus. Functionally, acts as a regulator of Wnt signaling pathway by regulating beta-catenin (CTNNB1) nuclear localization. This Mus musculus (Mouse) protein is Protein FAM53B.